Here is a 184-residue protein sequence, read N- to C-terminus: MDTQKIEAAVKMIIEAVGENVNREGLQETPARVARMYQEIFSGLGQTAEEHLSKSFEIIDDNMVVEKDIFFHTMCEHHFLPFYGRAHIAYIPDGRVAGLSKLARTVEVYSKKPQIQERLNIEVADALMDYLGAKGAFVVIEAEHMCMSMRGVRKPGTATLTTVARGLFETDKDLRDQAYRLMGL.

C75, H78, and C146 together coordinate Zn(2+).

Belongs to the GTP cyclohydrolase I family. Homomer.

The enzyme catalyses GTP + H2O = 7,8-dihydroneopterin 3'-triphosphate + formate + H(+). It functions in the pathway cofactor biosynthesis; 7,8-dihydroneopterin triphosphate biosynthesis; 7,8-dihydroneopterin triphosphate from GTP: step 1/1. The chain is GTP cyclohydrolase 1 from Streptococcus pneumoniae (strain Taiwan19F-14).